The following is a 236-amino-acid chain: Orotidine 5'-phosphate decarboxylase (236 aa).

Residues Asp-11, Lys-33, 60-69 (DLKLHDIPNT), Thr-119, Arg-181, Gln-190, Gly-210, and Arg-211 contribute to the substrate site. Lys-62 serves as the catalytic Proton donor.

It belongs to the OMP decarboxylase family. Type 1 subfamily. Homodimer.

The enzyme catalyses orotidine 5'-phosphate + H(+) = UMP + CO2. Its pathway is pyrimidine metabolism; UMP biosynthesis via de novo pathway; UMP from orotate: step 2/2. Its function is as follows. Catalyzes the decarboxylation of orotidine 5'-monophosphate (OMP) to uridine 5'-monophosphate (UMP). The protein is Orotidine 5'-phosphate decarboxylase of Cutibacterium acnes (strain DSM 16379 / KPA171202) (Propionibacterium acnes).